A 418-amino-acid polypeptide reads, in one-letter code: 3-isopropylmalate dehydratase large subunit (418 aa).

[4Fe-4S] cluster-binding residues include C298, C358, and C361.

This sequence belongs to the aconitase/IPM isomerase family. LeuC type 2 subfamily. In terms of assembly, heterodimer of LeuC and LeuD. The cofactor is [4Fe-4S] cluster.

It carries out the reaction (2R,3S)-3-isopropylmalate = (2S)-2-isopropylmalate. The protein operates within amino-acid biosynthesis; L-leucine biosynthesis; L-leucine from 3-methyl-2-oxobutanoate: step 2/4. Functionally, catalyzes the isomerization between 2-isopropylmalate and 3-isopropylmalate, via the formation of 2-isopropylmaleate. The chain is 3-isopropylmalate dehydratase large subunit from Caldanaerobacter subterraneus subsp. tengcongensis (strain DSM 15242 / JCM 11007 / NBRC 100824 / MB4) (Thermoanaerobacter tengcongensis).